The following is a 601-amino-acid chain: MDRSFIRNFAIIAHIDHGKSTLSDRLLELTGSLTAREMQAQVLDAMDLERERGITIKAHSVRMMYKAHDDVVYQLNLIDTPGHVDFSYEVSRSLASCEGALLVVDASQGVEAQTLANAYLAINNGLEIIPVINKIDLPSADVERAKEMIEGAVGLDASHALPISAKTGMGVEDILESIVHLVPPPKGNPDHPLQALIFDSWFDSYRGVVILARIKEGTVRKGDKIMLWSNKHQFLVEEMGVLTPKPVAIEQLEAGEVGFIVANIKTVADVGIGDTITHVERPCLEALPGFEELKPMVFAGIYTVDAHEHTLLREALEKLRLNDSSFFFEPESSVALGFGFRCGFLGLLHMEIIQERLEREYDLDLITTAPGVRYKITLTDNSVIEVDNPSKWPDSTLIEKIEEPIITAMILTNEEYVGGILKLVEEKRGRQKNFEYVTGSRVMLTYELPLNEIVLDFYDRLKSVSRGYASLDYHLAGAWESPMVKLDIMVAGESVDALSTIVHKDFAYDRGRALVSKMRELIPRQMFEVPIQAAIGAKIIARETVAAMRKNVLAKCYGGDISRKRKLLEKQKEGKKRMKRIGKVDIPQEAFLAVLKVGENS.

The 183-residue stretch at 4-186 (SFIRNFAIIA…SIVHLVPPPK (183 aa)) folds into the tr-type G domain. Residues 16 to 21 (DHGKST) and 133 to 136 (NKID) each bind GTP.

The protein belongs to the TRAFAC class translation factor GTPase superfamily. Classic translation factor GTPase family. LepA subfamily.

The protein resides in the cell inner membrane. The catalysed reaction is GTP + H2O = GDP + phosphate + H(+). Functionally, required for accurate and efficient protein synthesis under certain stress conditions. May act as a fidelity factor of the translation reaction, by catalyzing a one-codon backward translocation of tRNAs on improperly translocated ribosomes. Back-translocation proceeds from a post-translocation (POST) complex to a pre-translocation (PRE) complex, thus giving elongation factor G a second chance to translocate the tRNAs correctly. Binds to ribosomes in a GTP-dependent manner. This chain is Elongation factor 4, found in Koribacter versatilis (strain Ellin345).